The following is a 113-amino-acid chain: UPF0145 protein MTH_544 (113 aa).

Belongs to the UPF0145 family.

The protein is UPF0145 protein MTH_544 of Methanothermobacter thermautotrophicus (strain ATCC 29096 / DSM 1053 / JCM 10044 / NBRC 100330 / Delta H) (Methanobacterium thermoautotrophicum).